Consider the following 517-residue polypeptide: RNA-binding region-containing protein 3 (517 aa).

Residues methionine 1–aspartate 26 form a disordered region. The segment at methionine 1–methionine 257 is necessary for interaction with PDCD7. Phosphoserine is present on serine 21. The region spanning arginine 27–glutamate 102 is the RRM 1 domain. Disordered stretches follow at residues valine 106 to glutamate 130 and methionine 213 to arginine 254. Serine 108 bears the Phosphoserine mark. Basic and acidic residues predominate over residues serine 115–glutamate 130. The interval aspartate 211–aspartate 380 is necessary for binding to m(7)G-capped U12 snRNA. Positions alanine 217–proline 230 are enriched in pro residues. Acidic residues predominate over residues proline 231 to glutamate 252. The RRM 2 domain occupies cysteine 420–serine 503.

Component of the U11/U12 snRNPs that are part of the U12-type spliceosome. Found in a complex with m(7)G-capped U12 snRNA. Interacts with PDCD7. Highly expressed in pancreas and kidney. Detected at lower levels in heart, brain, placenta, lung, liver, spleen, thymus, prostate, testis, ovary, small intestine, colon and leukocytes.

The protein resides in the nucleus. Participates in pre-mRNA U12-dependent splicing, performed by the minor spliceosome which removes U12-type introns. U12-type introns comprises less than 1% of all non-coding sequences. Binds to the 3'-stem-loop of m(7)G-capped U12 snRNA. The polypeptide is RNA-binding region-containing protein 3 (RNPC3) (Homo sapiens (Human)).